A 42-amino-acid chain; its full sequence is Tachystatin-B2 (42 aa).

Cystine bridges form between cysteine 4–cysteine 20, cysteine 11–cysteine 25, and cysteine 19–cysteine 37.

In terms of tissue distribution, granular hemocytes, small secretory granules.

The protein localises to the secreted. Functionally, exhibits stronger antimicrobial activity against the Gram-positive bacteria (S.aureus (IC(50) is 7.4 ug/ml)) and fungi (C.albicans (IC(50) is 3.0 ug/ml) and P.pastoris (IC(50) is 0.1 ug/ml)) than Gram-negative bacteria (E.coli no inhibition at 100 ug/ml). Binds to chitin (4.3 uM are required to obtain 50% of binding). Does not cause hemolysis on sheep erythrocytes. Has no blocking activity on the P-type calcium channel. This is Tachystatin-B2 from Tachypleus tridentatus (Japanese horseshoe crab).